Consider the following 152-residue polypeptide: Sulfur-rich protein (152 aa).

The segment covering 1-11 has biased composition (polar residues); it reads MSTTPIVSGVT. The interval 1–21 is disordered; it reads MSTTPIVSGVTSQNNSSENVS. A compositionally biased stretch (low complexity) spans 12–21; that stretch reads SQNNSSENVS. A run of 2 helical transmembrane segments spans residues 44–64 and 73–93; these read VGLAVVGIFLVILSIVLLFIL and IYLAIPAILGCVNICIGILSM.

The protein localises to the membrane. The polypeptide is Sulfur-rich protein (srp) (Chlamydia muridarum (strain MoPn / Nigg)).